A 279-amino-acid chain; its full sequence is Movement protein (279 aa).

The segment at 246-279 (SESEELNVESPPAAIGSSSASRSEAFRPQVVNGL) is disordered. Over residues 254 to 268 (ESPPAAIGSSSASRS) the composition is skewed to low complexity.

The protein belongs to the cucumovirus movement protein family.

It localises to the host cell junction. It is found in the host plasmodesma. Its function is as follows. Transports viral genome to neighboring plant cells directly through plasmosdesmata, without any budding. The movement protein allows efficient cell to cell propagation, by bypassing the host cell wall barrier. Acts by forming a tubular structure at the host plasmodesmata, enlarging it enough to allow free passage of virion capsids. The chain is Movement protein from Cucumber mosaic virus (strain CS) (CMV).